Reading from the N-terminus, the 222-residue chain is Ribonuclease T (222 aa).

The Exonuclease domain occupies 20 to 194 (VVIDVETAGF…YDTERTAELF (175 aa)). Mg(2+) is bound by residues D23, E25, H181, and D186. H181 acts as the Proton donor/acceptor in catalysis.

Belongs to the RNase T family. As to quaternary structure, homodimer. Mg(2+) is required as a cofactor.

In terms of biological role, trims short 3' overhangs of a variety of RNA species, leaving a one or two nucleotide 3' overhang. Responsible for the end-turnover of tRNA: specifically removes the terminal AMP residue from uncharged tRNA (tRNA-C-C-A). Also appears to be involved in tRNA biosynthesis. The chain is Ribonuclease T from Shewanella sp. (strain ANA-3).